Reading from the N-terminus, the 348-residue chain is Glycerol-1-phosphate dehydrogenase [NAD(P)+] (348 aa).

NAD(+) contacts are provided by residues 94–98 and 116–119; these read GKPID and TAAS. A substrate-binding site is contributed by aspartate 121. Residue serine 125 coordinates NAD(+). Residue aspartate 168 coordinates substrate. Residues aspartate 168 and histidine 248 each contribute to the Zn(2+) site. Residue histidine 252 coordinates substrate. Histidine 264 contacts Zn(2+).

It belongs to the glycerol-1-phosphate dehydrogenase family. Zn(2+) serves as cofactor.

The protein resides in the cytoplasm. It catalyses the reaction sn-glycerol 1-phosphate + NAD(+) = dihydroxyacetone phosphate + NADH + H(+). It carries out the reaction sn-glycerol 1-phosphate + NADP(+) = dihydroxyacetone phosphate + NADPH + H(+). It functions in the pathway membrane lipid metabolism; glycerophospholipid metabolism. Its function is as follows. Catalyzes the NAD(P)H-dependent reduction of dihydroxyacetonephosphate (DHAP or glycerone phosphate) to glycerol 1-phosphate (G1P). The G1P thus generated is used as the glycerophosphate backbone of phospholipids in the cellular membranes of Archaea. The chain is Glycerol-1-phosphate dehydrogenase [NAD(P)+] from Haloquadratum walsbyi (strain DSM 16790 / HBSQ001).